Reading from the N-terminus, the 212-residue chain is Redox-sensing transcriptional repressor Rex (212 aa).

Residues 18–57 constitute a DNA-binding region (H-T-H motif); sequence LYYRFVNTLKSKGIDRVNSKAISEALNIESATIRRDFSYF. 92 to 97 contacts NAD(+); sequence GVGNLG.

Belongs to the transcriptional regulatory Rex family. Homodimer.

It is found in the cytoplasm. Its function is as follows. Modulates transcription in response to changes in cellular NADH/NAD(+) redox state. The protein is Redox-sensing transcriptional repressor Rex of Staphylococcus haemolyticus (strain JCSC1435).